The primary structure comprises 318 residues: Glycine--tRNA ligase alpha subunit (318 aa).

The interval 298-318 (EAGGSSPSTSRQGEAPRGESQ) is disordered. Polar residues predominate over residues 300–309 (GGSSPSTSRQ).

The protein belongs to the class-II aminoacyl-tRNA synthetase family. In terms of assembly, tetramer of two alpha and two beta subunits.

The protein resides in the cytoplasm. It carries out the reaction tRNA(Gly) + glycine + ATP = glycyl-tRNA(Gly) + AMP + diphosphate. In Rhodopseudomonas palustris (strain BisB18), this protein is Glycine--tRNA ligase alpha subunit.